The primary structure comprises 242 residues: Triosephosphate isomerase (242 aa).

Residue 9–11 (NWK) coordinates substrate. Catalysis depends on His-99, which acts as the Electrophile. Glu-169 serves as the catalytic Proton acceptor. Residues Gly-175, Ser-207, and 228–229 (GG) contribute to the substrate site.

This sequence belongs to the triosephosphate isomerase family. In terms of assembly, homodimer.

Its subcellular location is the cytoplasm. It carries out the reaction D-glyceraldehyde 3-phosphate = dihydroxyacetone phosphate. The protein operates within carbohydrate biosynthesis; gluconeogenesis. It participates in carbohydrate degradation; glycolysis; D-glyceraldehyde 3-phosphate from glycerone phosphate: step 1/1. Involved in the gluconeogenesis. Catalyzes stereospecifically the conversion of dihydroxyacetone phosphate (DHAP) to D-glyceraldehyde-3-phosphate (G3P). The sequence is that of Triosephosphate isomerase from Mycoplasma mobile (strain ATCC 43663 / 163K / NCTC 11711) (Mesomycoplasma mobile).